Consider the following 667-residue polypeptide: Probable export ATP-binding/permease protein MacB (667 aa).

The ABC transporter domain maps to 22–260 (LRLAGVSRRF…PVEEVQPAAE (239 aa)). ATP is bound at residue 58-65 (GASGSGKS). A run of 4 helical transmembrane segments spans residues 292–312 (LLTM…SAIG), 540–560 (LTLL…IGVM), 601–621 (IGGV…ALFV), and 630–650 (LGSI…FGFV).

It belongs to the ABC transporter superfamily. Macrolide exporter (TC 3.A.1.122) family. In terms of assembly, probably part of a tripartite efflux system, which is composed of an inner membrane transporter, a periplasmic membrane fusion protein, and an outer membrane component.

It localises to the cell inner membrane. In terms of biological role, probably part of a tripartite efflux system. The sequence is that of Probable export ATP-binding/permease protein MacB from Pseudomonas entomophila (strain L48).